A 394-amino-acid chain; its full sequence is Elongation factor Tu (394 aa).

The 195-residue stretch at 10–204 (KPHVNIGTIG…AVDSYIPQPV (195 aa)) folds into the tr-type G domain. Positions 19–26 (GHVDHGKT) are G1. Position 19-26 (19-26 (GHVDHGKT)) interacts with GTP. Residue threonine 26 coordinates Mg(2+). Residues 60–64 (GITIS) are G2. A G3 region spans residues 81-84 (DCPG). Residues 81–85 (DCPGH) and 136–139 (NKID) each bind GTP. The G4 stretch occupies residues 136–139 (NKID). A G5 region spans residues 174–176 (SAL).

This sequence belongs to the TRAFAC class translation factor GTPase superfamily. Classic translation factor GTPase family. EF-Tu/EF-1A subfamily. In terms of assembly, monomer.

It is found in the cytoplasm. The catalysed reaction is GTP + H2O = GDP + phosphate + H(+). Functionally, GTP hydrolase that promotes the GTP-dependent binding of aminoacyl-tRNA to the A-site of ribosomes during protein biosynthesis. The sequence is that of Elongation factor Tu from Rickettsia rickettsii.